A 62-amino-acid polypeptide reads, in one-letter code: Large ribosomal subunit protein bL28 (62 aa).

This sequence belongs to the bacterial ribosomal protein bL28 family.

The protein is Large ribosomal subunit protein bL28 of Carboxydothermus hydrogenoformans (strain ATCC BAA-161 / DSM 6008 / Z-2901).